The following is a 498-amino-acid chain: Glycerol kinase (498 aa).

Threonine 11 lines the ADP pocket. ATP is bound by residues threonine 11, serine 12, and serine 13. Threonine 11 contacts sn-glycerol 3-phosphate. Position 15 (arginine 15) interacts with ADP. The sn-glycerol 3-phosphate site is built by arginine 81, glutamate 82, tyrosine 133, and aspartate 242. Glycerol-binding residues include arginine 81, glutamate 82, tyrosine 133, aspartate 242, and glutamine 243. 2 residues coordinate ADP: threonine 264 and glycine 307. The ATP site is built by threonine 264, glycine 307, glutamine 311, and glycine 408. Positions 408 and 412 each coordinate ADP.

The protein belongs to the FGGY kinase family.

It catalyses the reaction glycerol + ATP = sn-glycerol 3-phosphate + ADP + H(+). It participates in polyol metabolism; glycerol degradation via glycerol kinase pathway; sn-glycerol 3-phosphate from glycerol: step 1/1. Its activity is regulated as follows. Inhibited by fructose 1,6-bisphosphate (FBP). Functionally, key enzyme in the regulation of glycerol uptake and metabolism. Catalyzes the phosphorylation of glycerol to yield sn-glycerol 3-phosphate. The chain is Glycerol kinase from Ralstonia nicotianae (strain ATCC BAA-1114 / GMI1000) (Ralstonia solanacearum).